The sequence spans 298 residues: HTH-type transcriptional regulator YhaJ (298 aa).

In terms of domain architecture, HTH lysR-type spans 7–64 (LTLEALRVMDAIDRRGSFAAAADELGRVPSALSYTMQKLEEELDVVLFDRSGHRTKFT). A DNA-binding region (H-T-H motif) is located at residues 24-43 (FAAAADELGRVPSALSYTMQ).

It belongs to the LysR transcriptional regulatory family.

Its function is as follows. Positive regulator partially required for expression of genes in the locus of effacement (LEE) large pathogenicity island (PAI). Also partially responsible for expression of neighboring gene dlsT (yhaO) during late exponential growth. Binds to DNA of promoter 1 in LEE and DNA from the dlsT promoter region. This Escherichia coli O157:H7 protein is HTH-type transcriptional regulator YhaJ (yhaJ).